The following is a 204-amino-acid chain: Tetraspanin-13 (204 aa).

Residues 1–19 are Cytoplasmic-facing; the sequence is MVCGGFSCSKNCLCALNLL. A helical transmembrane segment spans residues 20 to 40; it reads YTLVSLLLIGIAAWGIGFGLI. Topologically, residues 41 to 44 are extracellular; the sequence is SSLR. Residues 45 to 65 traverse the membrane as a helical segment; sequence VVGVVIAVGIFLFLIALVGLI. Residues 66 to 72 lie on the Cytoplasmic side of the membrane; the sequence is GAVKHHQ. The chain crosses the membrane as a helical span at residues 73–93; that stretch reads VLLFFYMIILLLVFIVQFSVS. Residues 94-167 lie on the Extracellular side of the membrane; sequence CACLALNREQ…IGEYAGEVLR (74 aa). 2 N-linked (GlcNAc...) asparagine glycosylation sites follow: Asn-113 and Asn-137. Ser-143 bears the Phosphoserine mark. Residues 168–188 form a helical membrane-spanning segment; that stretch reads FVGGIGLFFSFTEILGVWLTY. Residues 189–204 lie on the Cytoplasmic side of the membrane; the sequence is RYRNQKDPRANPSAFL.

The protein belongs to the tetraspanin (TM4SF) family.

The protein localises to the membrane. In Mus musculus (Mouse), this protein is Tetraspanin-13 (Tspan13).